Consider the following 692-residue polypeptide: Elongation factor G (692 aa).

The tr-type G domain maps to 8–282 (ENTRNIGIMA…AVIDYLPSPL (275 aa)). Residues 17–24 (AHIDAGKT), 81–85 (DTPGH), and 135–138 (NKMD) each bind GTP.

This sequence belongs to the TRAFAC class translation factor GTPase superfamily. Classic translation factor GTPase family. EF-G/EF-2 subfamily.

It localises to the cytoplasm. Catalyzes the GTP-dependent ribosomal translocation step during translation elongation. During this step, the ribosome changes from the pre-translocational (PRE) to the post-translocational (POST) state as the newly formed A-site-bound peptidyl-tRNA and P-site-bound deacylated tRNA move to the P and E sites, respectively. Catalyzes the coordinated movement of the two tRNA molecules, the mRNA and conformational changes in the ribosome. This chain is Elongation factor G, found in Bacillus anthracis (strain CDC 684 / NRRL 3495).